Reading from the N-terminus, the 124-residue chain is Urease subunit beta (124 aa).

This sequence belongs to the urease beta subunit family. Heterotrimer of UreA (gamma), UreB (beta) and UreC (alpha) subunits. Three heterotrimers associate to form the active enzyme.

It localises to the cytoplasm. It carries out the reaction urea + 2 H2O + H(+) = hydrogencarbonate + 2 NH4(+). It functions in the pathway nitrogen metabolism; urea degradation; CO(2) and NH(3) from urea (urease route): step 1/1. This is Urease subunit beta from Bacillus subtilis (strain 168).